The following is a 133-amino-acid chain: Large ribosomal subunit protein uL22 (133 aa).

Belongs to the universal ribosomal protein uL22 family. In terms of assembly, part of the 50S ribosomal subunit.

Its function is as follows. This protein binds specifically to 23S rRNA; its binding is stimulated by other ribosomal proteins, e.g. L4, L17, and L20. It is important during the early stages of 50S assembly. It makes multiple contacts with different domains of the 23S rRNA in the assembled 50S subunit and ribosome. The globular domain of the protein is located near the polypeptide exit tunnel on the outside of the subunit, while an extended beta-hairpin is found that lines the wall of the exit tunnel in the center of the 70S ribosome. The sequence is that of Large ribosomal subunit protein uL22 from Aquifex aeolicus (strain VF5).